A 298-amino-acid chain; its full sequence is Max-like protein X (298 aa).

The interval 1 to 63 (MTEPGASPED…PRGCREDSSH (63 aa)) is disordered. Phosphoserine is present on Ser-7. Positions 28–37 (GRARARRGAG) are enriched in basic residues. 5 positions are modified to phosphoserine: Ser-45, Ser-48, Ser-74, Ser-77, and Ser-98. Positions 91 to 145 (SVVSRANSIGSTSASSVPNTDDEDSDYHQEAYKESYKDRRRRAHTQAEQKRRDAI) are disordered. Positions 94–109 (SRANSIGSTSASSVPN) are enriched in polar residues. 2 stretches are compositionally biased toward basic and acidic residues: residues 116 to 127 (DYHQEAYKESYK) and 135 to 145 (TQAEQKRRDAI). Residues 129–187 (RRRRAHTQAEQKRRDAIKRGYDDLQTIVPTCQQQDFSIGSQKLSKAIVLQKTIDYIQFL) enclose the bHLH domain. The interval 140–160 (KRRDAIKRGYDDLQTIVPTCQ) is leucine-zipper.

In terms of assembly, efficient DNA binding requires dimerization with another bHLH protein. Binds DNA as a heterodimer with MAD1, MAD4, MNT, WBSCR14 and MLXIP. Can also bind DNA as a homodimer. In terms of tissue distribution, expressed in all tissues tested, including spleen, thymus, prostate, ovary, intestine, colon, peripheral blood leukocyte, heart, liver, skeletal muscle and kidney. Lower levels of expression in testis, brain, placenta and lung.

Its subcellular location is the cytoplasm. The protein resides in the nucleus. Its function is as follows. Transcription regulator. Forms a sequence-specific DNA-binding protein complex with MAD1, MAD4, MNT, WBSCR14 and MLXIP which recognizes the core sequence 5'-CACGTG-3'. The TCFL4-MAD1, TCFL4-MAD4, TCFL4-WBSCR14 complexes are transcriptional repressors. Plays a role in transcriptional activation of glycolytic target genes. Involved in glucose-responsive gene regulation. The protein is Max-like protein X (MLX) of Homo sapiens (Human).